A 517-amino-acid polypeptide reads, in one-letter code: Maturase K (517 aa).

Belongs to the intron maturase 2 family. MatK subfamily.

It is found in the plastid. The protein localises to the chloroplast. Usually encoded in the trnK tRNA gene intron. Probably assists in splicing its own and other chloroplast group II introns. This is Maturase K from Acer pseudoplatanus (Sycamore maple).